A 222-amino-acid polypeptide reads, in one-letter code: Charged multivesicular body protein 3 (222 aa).

A lipid anchor (N-myristoyl glycine) is attached at Gly-2. Residues 2 to 113 (GLFGKTQEKP…LQKSTEVMKA (112 aa)) form an intramolecular interaction with C-terminus region. The stretch at 22-54 (KIRKEMRVVDRQIRDIQREEEKVKRSVKDAAKK) forms a coiled coil. Important for autoinhibitory function regions lie at residues 59-64 (VCIVLA) and 168-169 (IL). The stretch at 141–222 (EEMLEDTFES…MQSRLATLRS (82 aa)) forms a coiled coil. An intramolecular interaction with N-terminus region spans residues 151-220 (MDDQEEMEEE…EAMQSRLATL (70 aa)). The interval 151–222 (MDDQEEMEEE…MQSRLATLRS (72 aa)) is interaction with VPS4A. Lys-179 participates in a covalent cross-link: Glycyl lysine isopeptide (Lys-Gly) (interchain with G-Cter in ubiquitin). Residues 180-222 (APSKVTDALPEPEPPGAMAASEDEEEEEEALEAMQSRLATLRS) form a disordered region. Ser-200 carries the phosphoserine modification. Residues 200-210 (SEDEEEEEEAL) show a composition bias toward acidic residues. Residues 201-211 (EDEEEEEEALE) carry the MIT-interacting motif motif. Interaction with STAMBP stretches follow at residues 203–207 (EEEEE) and 221–222 (RS).

This sequence belongs to the SNF7 family. As to quaternary structure, probable core component of the endosomal sorting required for transport complex III (ESCRT-III). ESCRT-III components are thought to multimerize to form a flat lattice on the perimeter membrane of the endosome. Several assembly forms of ESCRT-III may exist that interact and act sequentially. Forms a metastable monomer in solution; its core structure (without part of the putative autoinhibitory C-terminal acidic region) oligomerizes into a flat lattice via two different dimerization interfaces. In vitro, heteromerizes with CHMP2A (but not CHMP4) to form helical tubular structures that expose membrane-interacting sites on the outside whereas VPS4B can associate on the inside of the tubule. May interact with IGFBP7; the relevance of such interaction however remains unclear. Interacts with CHMP2A. Interacts with CHMP4A; the interaction requires the release of CHMP4A autoinhibition. Interacts with VPS4A. Interacts with STAMBP; the interaction appears to relieve the autoinhibition of CHMP3. Interacts with VTA1. As to expression, widely expressed. Expressed in heart, brain, placenta, lung, liver, skeletal muscle, kidney and pancreas.

It localises to the cytoplasm. It is found in the cytosol. The protein localises to the membrane. Its subcellular location is the endosome. The protein resides in the late endosome membrane. Functionally, probable core component of the endosomal sorting required for transport complex III (ESCRT-III) which is involved in multivesicular bodies (MVBs) formation and sorting of endosomal cargo proteins into MVBs. MVBs contain intraluminal vesicles (ILVs) that are generated by invagination and scission from the limiting membrane of the endosome and mostly are delivered to lysosomes enabling degradation of membrane proteins, such as stimulated growth factor receptors, lysosomal enzymes and lipids. The MVB pathway appears to require the sequential function of ESCRT-O, -I,-II and -III complexes. ESCRT-III proteins mostly dissociate from the invaginating membrane before the ILV is released. The ESCRT machinery also functions in topologically equivalent membrane fission events, such as the terminal stages of cytokinesis and the budding of enveloped viruses (HIV-1 and other lentiviruses). ESCRT-III proteins are believed to mediate the necessary vesicle extrusion and/or membrane fission activities, possibly in conjunction with the AAA ATPase VPS4. Selectively binds to phosphatidylinositol 3,5-bisphosphate PtdIns(3,5)P2 and PtdIns(3,4)P2 in preference to other phosphoinositides tested. Involved in late stages of cytokinesis. Plays a role in endosomal sorting/trafficking of EGF receptor. Isoform 2 prevents stress-mediated cell death and accumulation of reactive oxygen species when expressed in yeast cells. In Homo sapiens (Human), this protein is Charged multivesicular body protein 3 (CHMP3).